Reading from the N-terminus, the 169-residue chain is S-ribosylhomocysteine lyase (169 aa).

The Fe cation site is built by His-54, His-58, and Cys-128.

It belongs to the LuxS family. Homodimer. It depends on Fe cation as a cofactor.

The catalysed reaction is S-(5-deoxy-D-ribos-5-yl)-L-homocysteine = (S)-4,5-dihydroxypentane-2,3-dione + L-homocysteine. In terms of biological role, involved in the synthesis of autoinducer 2 (AI-2) which is secreted by bacteria and is used to communicate both the cell density and the metabolic potential of the environment. The regulation of gene expression in response to changes in cell density is called quorum sensing. Catalyzes the transformation of S-ribosylhomocysteine (RHC) to homocysteine (HC) and 4,5-dihydroxy-2,3-pentadione (DPD). The chain is S-ribosylhomocysteine lyase from Aeromonas hydrophila subsp. hydrophila (strain ATCC 7966 / DSM 30187 / BCRC 13018 / CCUG 14551 / JCM 1027 / KCTC 2358 / NCIMB 9240 / NCTC 8049).